Here is a 353-residue protein sequence, read N- to C-terminus: Photosystem II D2 protein (353 aa).

The residue at position 2 (threonine 2) is an N-acetylthreonine. The residue at position 2 (threonine 2) is a Phosphothreonine. Residues 41-61 (CAYFSLGGWLTGTTFVTSWYT) form a helical membrane-spanning segment. Histidine 118 contributes to the chlorophyll a binding site. Residues 125–141 (GFMLRQFELARSVQLRP) form a helical membrane-spanning segment. Pheophytin a contacts are provided by glutamine 130 and asparagine 143. Residues 153–166 (VFVSVFLIYPLGQS) traverse the membrane as a helical segment. Residue histidine 198 coordinates chlorophyll a. A helical membrane pass occupies residues 208–228 (AALLCAIHGATVENTLFEDGD). The a plastoquinone site is built by histidine 215 and phenylalanine 262. A Fe cation-binding site is contributed by histidine 215. Histidine 269 contacts Fe cation. A helical membrane pass occupies residues 279-295 (GLWMSAIGVVGLALNLR).

The protein belongs to the reaction center PufL/M/PsbA/D family. In terms of assembly, PSII is composed of 1 copy each of membrane proteins PsbA, PsbB, PsbC, PsbD, PsbE, PsbF, PsbH, PsbI, PsbJ, PsbK, PsbL, PsbM, PsbT, PsbX, PsbY, PsbZ, Psb30/Ycf12, at least 3 peripheral proteins of the oxygen-evolving complex and a large number of cofactors. It forms dimeric complexes. The cofactor is The D1/D2 heterodimer binds P680, chlorophylls that are the primary electron donor of PSII, and subsequent electron acceptors. It shares a non-heme iron and each subunit binds pheophytin, quinone, additional chlorophylls, carotenoids and lipids. There is also a Cl(-1) ion associated with D1 and D2, which is required for oxygen evolution. The PSII complex binds additional chlorophylls, carotenoids and specific lipids..

The protein resides in the plastid. Its subcellular location is the chloroplast thylakoid membrane. The enzyme catalyses 2 a plastoquinone + 4 hnu + 2 H2O = 2 a plastoquinol + O2. Its function is as follows. Photosystem II (PSII) is a light-driven water:plastoquinone oxidoreductase that uses light energy to abstract electrons from H(2)O, generating O(2) and a proton gradient subsequently used for ATP formation. It consists of a core antenna complex that captures photons, and an electron transfer chain that converts photonic excitation into a charge separation. The D1/D2 (PsbA/PsbD) reaction center heterodimer binds P680, the primary electron donor of PSII as well as several subsequent electron acceptors. D2 is needed for assembly of a stable PSII complex. In Chara vulgaris (Common stonewort), this protein is Photosystem II D2 protein.